The following is a 520-amino-acid chain: Protein U4 (520 aa).

Belongs to the herpesviridae U4 family.

This is Protein U4 from Elephantid herpesvirus 1 (isolate Asian elephant/Berlin/Kiba/1998) (EIHV-1).